The primary structure comprises 343 residues: Dihydroorotase (343 aa).

Zn(2+) contacts are provided by His14 and His16. Substrate is bound by residues 16-18 (HLR) and Asn42. Lys100, His137, and His175 together coordinate Zn(2+). N6-carboxylysine is present on Lys100. His137 is a substrate binding site. Leu220 serves as a coordination point for substrate. Zn(2+) is bound at residue Asp248. The active site involves Asp248. Substrate contacts are provided by His252 and Ala264.

Belongs to the metallo-dependent hydrolases superfamily. DHOase family. Class II DHOase subfamily. In terms of assembly, homodimer. Zn(2+) is required as a cofactor.

The catalysed reaction is (S)-dihydroorotate + H2O = N-carbamoyl-L-aspartate + H(+). Its pathway is pyrimidine metabolism; UMP biosynthesis via de novo pathway; (S)-dihydroorotate from bicarbonate: step 3/3. Functionally, catalyzes the reversible cyclization of carbamoyl aspartate to dihydroorotate. The sequence is that of Dihydroorotase from Parasynechococcus marenigrum (strain WH8102).